Here is a 255-residue protein sequence, read N- to C-terminus: Hydroxyacylglutathione hydrolase (255 aa).

His-56, His-58, Asp-60, His-61, His-114, Asp-133, and His-171 together coordinate Zn(2+).

This sequence belongs to the metallo-beta-lactamase superfamily. Glyoxalase II family. In terms of assembly, monomer. The cofactor is Zn(2+).

It catalyses the reaction an S-(2-hydroxyacyl)glutathione + H2O = a 2-hydroxy carboxylate + glutathione + H(+). The protein operates within secondary metabolite metabolism; methylglyoxal degradation; (R)-lactate from methylglyoxal: step 2/2. Its function is as follows. Thiolesterase that catalyzes the hydrolysis of S-D-lactoyl-glutathione to form glutathione and D-lactic acid. The polypeptide is Hydroxyacylglutathione hydrolase (Bradyrhizobium diazoefficiens (strain JCM 10833 / BCRC 13528 / IAM 13628 / NBRC 14792 / USDA 110)).